A 29-amino-acid chain; its full sequence is Dermaseptin-S5 (29 aa).

It belongs to the frog skin active peptide (FSAP) family. Dermaseptin subfamily. As to expression, expressed by the skin glands.

The protein localises to the secreted. Its function is as follows. Potent antimicrobial peptide with activity against bacteria and protozoa. Also has activity against fungi. Probably acts by disturbing membrane functions with its amphipathic structure. The polypeptide is Dermaseptin-S5 (Phyllomedusa sauvagei (Sauvage's leaf frog)).